We begin with the raw amino-acid sequence, 268 residues long: NADH-quinone oxidoreductase subunit B 1 (268 aa).

[4Fe-4S] cluster contacts are provided by cysteine 42, cysteine 43, cysteine 108, and cysteine 138.

Belongs to the complex I 20 kDa subunit family. NDH-1 is composed of 14 different subunits. Subunits NuoB, C, D, E, F, and G constitute the peripheral sector of the complex. [4Fe-4S] cluster is required as a cofactor.

It is found in the cell membrane. The catalysed reaction is a quinone + NADH + 5 H(+)(in) = a quinol + NAD(+) + 4 H(+)(out). NDH-1 shuttles electrons from NADH, via FMN and iron-sulfur (Fe-S) centers, to quinones in the respiratory chain. The immediate electron acceptor for the enzyme in this species is believed to be ubiquinone. Couples the redox reaction to proton translocation (for every two electrons transferred, four hydrogen ions are translocated across the cytoplasmic membrane), and thus conserves the redox energy in a proton gradient. The chain is NADH-quinone oxidoreductase subunit B 1 from Roseiflexus sp. (strain RS-1).